The primary structure comprises 889 residues: MLSSVCVWSFSGRQGTRKQHSQPAPTPQPPESSPPPLLPPPQQQCAQPGTAASPAGAPLSCGPGGRRAEPCSGLPAVAMGRHGGGGGDSGKIVINVGGVRHETYRSTLRTLPGTRLAGLTEPEAAARFDYDPGTDEFFFDRHPGVFAYVLNYYRTGKLHCPADVCGPLFEEELGFWGIDETDVEACCWMTYRQHRDAEEALDSFEAPDSSGNANANAGGAHDAGLDDEAGAGGGGLDGAGGELKRLCFQDAGGGAGGPAGGPGGAGGTWWRRWQPRVWALFEDPYSSRAARYVAFASLFFILISITTFCLETHEGFIHISNKTVTQASPIPGAPPENITNVEVETEPFLTYVEGVCVVWFTFEFLMRVTFCPDKVEFLKSSLNIIDCVAILPFYLEVGLSGLSSKAAKDVLGFLRVVRFVRILRIFKLTRHFVGLRVLGHTLRASTNEFLLLIIFLALGVLIFATMIYYAERIGADPDDILGSNHTYFKNIPIGFWWAVVTMTTLGYGDMYPKTWSGMLVGALCALAGVLTIAMPVPVIVNNFGMYYSLAMAKQKLPKKKNKHIPRPPQPGSPNYCKPDPPPPPPPHPHHGSGGISPPPPITPPSMGVTVAGAYPPGPHTHPGLLRGGAGGLGIMGLPPLPAPGEPCPLAQEEVIETNRAGNDLGVLEEGDPRPNGDPAAAALAHEDCPAIDQPAMSPEDKSPITPGSRGRYSRDRACFLVTDYAPSPDGSIRKATGAPPLPPHAGVSQAPPASCPTSTPTQQPGYPPSGRAPSPPQATPEAPAIFDVWLPPFHRSHQPPGKHQRGGRHPGVSPSPQQRACVGEPPSASHPQSLTLCISVPSSCHRLRPRETLGFPLSLPPRLATGNGGRECPRDPGLPFPSRHSSPAV.

Positions 1–80 (MLSSVCVWSF…CSGLPAVAMG (80 aa)) are important for normal N-type inactivation. Topologically, residues 1-291 (MLSSVCVWSF…EDPYSSRAAR (291 aa)) are cytoplasmic. Residues 10-66 (FSGRQGTRKQHSQPAPTPQPPESSPPPLLPPPQQQCAQPGTAASPAGAPLSCGPGGR) are disordered. A compositionally biased stretch (pro residues) spans 24–42 (APTPQPPESSPPPLLPPPQ). Residues His-159, Cys-165, Cys-186, and Cys-187 each coordinate Zn(2+). The tract at residues 202 to 231 (DSFEAPDSSGNANANAGGAHDAGLDDEAGA) is disordered. Residues 211-222 (GNANANAGGAHD) are compositionally biased toward low complexity. Residues 292 to 310 (YVAFASLFFILISITTFCL) form a helical membrane-spanning segment. Asn-321 carries N-linked (GlcNAc...) asparagine glycosylation. The helical transmembrane segment at 352–371 (VEGVCVVWFTFEFLMRVTFC) threads the bilayer. At 372 to 380 (PDKVEFLKS) the chain is on the cytoplasmic side. A helical transmembrane segment spans residues 381-399 (SLNIIDCVAILPFYLEVGL). Residues 413 to 435 (FLRVVRFVRILRIFKLTRHFVGL) traverse the membrane as a helical; Voltage-sensor segment. The Cytoplasmic portion of the chain corresponds to 436-448 (RVLGHTLRASTNE). A helical membrane pass occupies residues 449 to 470 (FLLLIIFLALGVLIFATMIYYA). The K(+) site is built by Thr-504, Leu-505, Gly-506, and Tyr-507. A Selectivity filter motif is present at residues 504–509 (TLGYGD). A helical transmembrane segment spans residues 519–540 (LVGALCALAGVLTIAMPVPVIV). The Cytoplasmic portion of the chain corresponds to 541 to 889 (NNFGMYYSLA…FPSRHSSPAV (349 aa)). Disordered stretches follow at residues 557–627 (PKKK…LLRG), 691–834 (IDQP…PQSL), and 852–889 (TLGFPLSLPPRLATGNGGRECPRDPGLPFPSRHSSPAV). Arg-626 carries the omega-N-methylarginine modification. Phosphoserine is present on residues Ser-697 and Ser-702. Over residues 748-764 (SQAPPASCPTSTPTQQP) the composition is skewed to low complexity. Thr-759 bears the Phosphothreonine mark. Basic residues predominate over residues 794–808 (HRSHQPPGKHQRGGR).

Belongs to the potassium channel family. C (Shaw) (TC 1.A.1.2) subfamily. Kv3.3/KCNC3 sub-subfamily. In terms of assembly, homotetramer. Heterotetramer with KCNC1. Interacts (via C-terminus) with HAX1; this interaction modulates channel gating. Identified in a complex with ACTR3, a subunit of the Arp2/3 complex; this interaction is indirect and depends on the presence of HAX1. Post-translationally, N-glycosylated. Detected on Purkinje cells in the cerebellum molecular layer (at protein level).

The protein localises to the cell membrane. Its subcellular location is the presynaptic cell membrane. It localises to the perikaryon. The protein resides in the cell projection. It is found in the axon. The protein localises to the dendrite. Its subcellular location is the dendritic spine membrane. It localises to the cytoplasm. The protein resides in the cell cortex. It is found in the cytoskeleton. The catalysed reaction is K(+)(in) = K(+)(out). Voltage-gated potassium channel that plays an important role in the rapid repolarization of fast-firing brain neurons. The channel opens in response to the voltage difference across the membrane, forming a potassium-selective channel through which potassium ions pass in accordance with their electrochemical gradient. The channel displays rapid activation and inactivation kinetics. It plays a role in the regulation of the frequency, shape and duration of action potentials in Purkinje cells. Required for normal survival of cerebellar neurons, probably via its role in regulating the duration and frequency of action potentials that in turn regulate the activity of voltage-gated Ca(2+) channels and cellular Ca(2+) homeostasis. Required for normal motor function. Plays a role in the reorganization of the cortical actin cytoskeleton and the formation of actin veil structures in neuronal growth cones via its interaction with HAX1 and the Arp2/3 complex. The sequence is that of Voltage-gated potassium channel KCNC3 from Rattus norvegicus (Rat).